A 249-amino-acid polypeptide reads, in one-letter code: Indole-3-glycerol phosphate synthase (249 aa).

Belongs to the TrpC family.

It carries out the reaction 1-(2-carboxyphenylamino)-1-deoxy-D-ribulose 5-phosphate + H(+) = (1S,2R)-1-C-(indol-3-yl)glycerol 3-phosphate + CO2 + H2O. It participates in amino-acid biosynthesis; L-tryptophan biosynthesis; L-tryptophan from chorismate: step 4/5. This is Indole-3-glycerol phosphate synthase from Pyrobaculum aerophilum (strain ATCC 51768 / DSM 7523 / JCM 9630 / CIP 104966 / NBRC 100827 / IM2).